The sequence spans 1042 residues: Kinesin-like protein KIN-5A (1042 aa).

A compositionally biased stretch (low complexity) spans methionine 1 to serine 14. The segment at methionine 1–lysine 45 is disordered. The span at serine 21 to valine 31 shows a compositional bias: basic and acidic residues. The span at aspartate 32–serine 41 shows a compositional bias: polar residues. The region spanning asparagine 50 to isoleucine 392 is the Kinesin motor domain. Glycine 136–threonine 143 contributes to the ATP binding site. Residues threonine 480 to glutamate 517 adopt a coiled-coil conformation. Residues lysine 1021–asparagine 1042 form a disordered region.

This sequence belongs to the TRAFAC class myosin-kinesin ATPase superfamily. Kinesin family. KIN-5/BimC subfamily.

It is found in the cytoplasm. It localises to the cytoskeleton. The protein localises to the spindle. Responsible for microtubule translocation. May be important for the organization of phragmoplast-specific arrays of microtubules. Plays an essential role in stabilizing the mitotic spindle. Required during mitotic cytokinesis. The polypeptide is Kinesin-like protein KIN-5A (Arabidopsis thaliana (Mouse-ear cress)).